Consider the following 204-residue polypeptide: MDRAILLLSVLSVGVSSQPITEGQRLFSIAVERVHNLHLLAQRLFSEFESSLQTEEQRQLNKIFLQDFCNSDYIISPIDKHETQRSSVLKLLSISYRLIESWEFPSRSLSVGPAARNQISPKLSELKTGILVLIGANQDGAEMFPDSSTLQLAPYGNYYQSLGADESLRRTYELLACFKKDMHKVETYLTVAKCRLSPEANCTL.

The first 17 residues, 1 to 17 (MDRAILLLSVLSVGVSS), serve as a signal peptide directing secretion. Residue Gln-18 is modified to Pyrrolidone carboxylic acid. His-35 serves as a coordination point for Zn(2+). Cys-69 and Cys-177 are joined by a disulfide. Glu-186 is a binding site for Zn(2+). A disulfide bridge links Cys-194 with Cys-202.

The protein belongs to the somatotropin/prolactin family.

The protein localises to the secreted. In terms of biological role, growth hormone plays an important role in growth control and is involved in the regulation of several anabolic processes. Implicated as an osmoregulatory substance important for seawater adaptation. This Dicentrarchus labrax (European seabass) protein is Somatotropin (gh).